The sequence spans 2016 residues: Cell adhesion molecule Dscam1 (2016 aa).

An N-terminal signal peptide occupies residues 1–28; it reads MNMPNERLKWLMLFAAVALIACGSQTLA. Over 29–1618 the chain is Extracellular; it reads ANPPDADQKG…TIRIILSNLN (1590 aa). Ig-like C2-type domains lie at 39-134, 138-230, 247-338, 342-421, 428-522, 527-613, 618-712, 715-807, and 812-904; these read PVFL…VHVR, AQYY…TRLS, PKIN…TVLT, PLSA…AELK, PPVI…AKLN, PYIR…LEVQ, PQVL…LQVN, PRWI…IMIS, and PEFT…ASIN. N-linked (GlcNAc...) asparagine glycosylation is present at asparagine 53. Cysteines 61 and 117 form a disulfide. 3 residues coordinate Zn(2+): aspartate 144, asparagine 146, and leucine 161. 13 cysteine pairs are disulfide-bonded: cysteine 160–cysteine 217, cysteine 160–threonine 219, cysteine 160–lysine 220, cysteine 269–cysteine 322, proline 270–valine 323, alanine 276–glycine 329, cysteine 364–cysteine 405, cysteine 450–cysteine 506, cysteine 547–cysteine 596, cysteine 640–cysteine 694, valine 641–cysteine 694, valine 641–isoleucine 695, and cysteine 736–cysteine 790. Asparagine 325 is a glycosylation site (N-linked (GlcNAc...) asparagine). Residues asparagine 492 and asparagine 577 are each glycosylated (N-linked (GlcNAc...) asparagine). Asparagine 820 carries N-linked (GlcNAc...) asparagine glycosylation. Cysteine 833 and cysteine 890 are joined by a disulfide. Fibronectin type-III domains are found at residues 913-1007, 1012-1116, 1117-1213, and 1217-1310; these read MPYA…TAEE, KPQN…TPSQ, PPSD…TEPD, and APTD…PSDQ. 3 N-linked (GlcNAc...) asparagine glycosylation sites follow: asparagine 1022, asparagine 1055, and asparagine 1186. The 83-residue stretch at 1312-1394 folds into the Ig-like C2-type 10 domain; it reads PAKIASFDDT…ENSIAKDSIT (83 aa). Cysteines 1334 and 1382 form a disulfide. Fibronectin type-III domains follow at residues 1402-1495 and 1499-1594; these read PPQS…TKGQ and LPEK…TGGT. The chain crosses the membrane as a helical span at residues 1619–1639; the sequence is LVVPVVAALLVIIIAIIVICI. Residues 1640–2016 lie on the Cytoplasmic side of the membrane; sequence LRSKGNHHKD…GFTAYDTMAV (377 aa). A PXXP motif 1; SH3-binding motif is present at residues 1685-1688; the sequence is PPVP. Residues 1688-1719 form a disordered region; the sequence is PGSNYNTCDRIKRGRGGLRSNHSTWDPRRNPN. Positions 1727–1730 match the PXXP motif 2; SH3-binding motif; that stretch reads PPVP. Disordered stretches follow at residues 1787–1846 and 1862–2016; these read GHAG…DDPA and SQGG…TMAV. Residues 1826-1836 are compositionally biased toward polar residues; it reads KNSQGGQSSIY. Residues 1842–1845 carry the YXXP motif 1; potential SH2-binding motif; it reads YDDP. Residues 1875 to 1878 carry the YXXP motif 2; potential SH2-binding motif; it reads YDDP. The segment covering 1897–1918 has biased composition (low complexity); it reads GQPYDHYGSRGSMGRRSIGSAR. The Polyproline tract (probable SH3-binding) signature appears at 1925–1932; the sequence is PEPPPPPP. 2 stretches are compositionally biased toward basic and acidic residues: residues 1944-1962 and 1974-1993; these read DSKESNEISEAECDRDHGP and QPKDQRTTEEMRKLIERNET. Positions 1994–2004 are enriched in polar residues; sequence GPKQLQLQQAN.

Homodimer (via extracellular region); alternative splicing produces a potential 19,008 different ectodomains and the majority of these show strong isoform-specific homodimerization. Interacts (via cytoplasmic domain) with dock/dreadlocks (via SH2 and SH3 domains); the interaction is direct and may require Dscam1 to be phosphorylated. In terms of processing, phosphorylated on tyrosine residues in the intracellular domain. Tyrosine protein kinase Src42A and possibly Src64B are involved in this phosphorylation. Post-translationally, glycosylation on Asn-53 and Asn-325 is involved in stabilizing dimerization. Proteolytically processed, probably to generate a secreted form. Secreted into the hemolymph (at protein level). Expressed in brain and eye-antennal imaginal disks, including R3/R4 and R7 photoreceptor cells. Individual R3/R4 cells express between 14 and 50 randomly generated mRNAs encoding distinct isoforms.

The protein resides in the cell membrane. Its subcellular location is the cell projection. The protein localises to the neuron projection. It localises to the axon. It is found in the perikaryon. The protein resides in the dendrite. Its subcellular location is the secreted. In terms of biological role, cell surface receptor involved in guidance and targeting of growing nerve axons. Required during Bolwig's organ differentiation for accurate and efficient targeting of photoreceptor neuron axons to their synaptic targets in the brain via the P2 intermediate target neuron. Involved in isoneural self-avoidance during dendrite arborization but not in heteroneural recognition and repulsion during tiling by related neurons of the same class. Involved in regulating axon bifurcation and divergent extension in the developing mushroom body. Essential for axon arborisation in ellipsoid body. Exhibits an extraordinary level of molecular diversity resulting from alternative splicing. Isoforms differing in their ectodomain makeup show a high degree of functional redundancy while isoforms with different transmembrane domains are involved in different neuronal morphogenetic processes and are differentially targeted to dendrites or axons. The vast majority of isoforms exhibit strong isoform-specific homophilic binding. Individual cells express a distinct randomly generated repertoire of isoforms. Cell surfaces bearing identical repertoires of Dscam1 isoforms, such as those from the same cell, trigger recognition and avoidance. A subset of isoforms is expressed in fat body cells and hemocytes, cells that are part of the insect immune response, and these isoforms are secreted into the hemolymph. The secreted form comprising the ectodomain can bind to bacteria, such as Escherichia coli, and may act as an opsonin enhancing their phagocytosis by hemocytes. This Drosophila melanogaster (Fruit fly) protein is Cell adhesion molecule Dscam1.